A 437-amino-acid polypeptide reads, in one-letter code: GTPase Der (437 aa).

2 consecutive EngA-type G domains span residues N3–S167 and P176–M352. GTP contacts are provided by residues G9 to S16, D56 to W60, N119 to D122, G182 to S189, D229 to I233, and N294 to D297. A KH-like domain is found at I353 to K437.

Belongs to the TRAFAC class TrmE-Era-EngA-EngB-Septin-like GTPase superfamily. EngA (Der) GTPase family. As to quaternary structure, associates with the 50S ribosomal subunit.

Its function is as follows. GTPase that plays an essential role in the late steps of ribosome biogenesis. This Bacteroides fragilis (strain ATCC 25285 / DSM 2151 / CCUG 4856 / JCM 11019 / LMG 10263 / NCTC 9343 / Onslow / VPI 2553 / EN-2) protein is GTPase Der.